The sequence spans 164 residues: Pheromone-binding protein (164 aa).

Positions 1–22 (MSIQGQIALALMVNMAVGSVDA) are cleaved as a signal peptide. Intrachain disulfides connect C41-C76, C72-C130, and C119-C139.

Belongs to the PBP/GOBP family. Homodimer. Antenna.

This major soluble protein in olfactory sensilla of male moths serves to solubilize the extremely hydrophobic pheromone molecules such as bombykol and to transport pheromone through the aqueous lymph to receptors located on olfactory cilia. This chain is Pheromone-binding protein, found in Bombyx mori (Silk moth).